We begin with the raw amino-acid sequence, 178 residues long: Translation initiation factor IF-3 (178 aa).

The interval 1–20 is disordered; the sequence is MRRPFKAAAPTKDGPRSNRD.

This sequence belongs to the IF-3 family. In terms of assembly, monomer.

The protein resides in the cytoplasm. IF-3 binds to the 30S ribosomal subunit and shifts the equilibrium between 70S ribosomes and their 50S and 30S subunits in favor of the free subunits, thus enhancing the availability of 30S subunits on which protein synthesis initiation begins. This is Translation initiation factor IF-3 from Mesorhizobium japonicum (strain LMG 29417 / CECT 9101 / MAFF 303099) (Mesorhizobium loti (strain MAFF 303099)).